The following is a 238-amino-acid chain: RxLR effector protein PITG_14788 (238 aa).

An N-terminal signal peptide occupies residues Met-1–Ala-23. A RxLR-dEER motif is present at residues Arg-47–Arg-65.

Belongs to the RxLR effector family.

The protein resides in the secreted. It is found in the host cytoplasm. It localises to the host cytoskeleton. Its subcellular location is the host nucleus. The protein localises to the host nucleolus. Its function is as follows. Effector that enhances P.infestans colonization of Nicotiana benthamiana leaves. This chain is RxLR effector protein PITG_14788, found in Phytophthora infestans (strain T30-4) (Potato late blight agent).